Consider the following 265-residue polypeptide: Hydroxyethylthiazole kinase (265 aa).

Met-50 lines the substrate pocket. 2 residues coordinate ATP: Arg-125 and Thr-171. Residue Gly-198 participates in substrate binding.

It belongs to the Thz kinase family. It depends on Mg(2+) as a cofactor.

It carries out the reaction 5-(2-hydroxyethyl)-4-methylthiazole + ATP = 4-methyl-5-(2-phosphooxyethyl)-thiazole + ADP + H(+). It functions in the pathway cofactor biosynthesis; thiamine diphosphate biosynthesis; 4-methyl-5-(2-phosphoethyl)-thiazole from 5-(2-hydroxyethyl)-4-methylthiazole: step 1/1. Its function is as follows. Catalyzes the phosphorylation of the hydroxyl group of 4-methyl-5-beta-hydroxyethylthiazole (THZ). The polypeptide is Hydroxyethylthiazole kinase (Salmonella paratyphi C (strain RKS4594)).